Reading from the N-terminus, the 139-residue chain is Ribulose bisphosphate carboxylase small subunit (139 aa).

Belongs to the RuBisCO small chain family. Heterohexadecamer of 8 large and 8 small subunits.

Its subcellular location is the plastid. It is found in the chloroplast. Functionally, ruBisCO catalyzes two reactions: the carboxylation of D-ribulose 1,5-bisphosphate, the primary event in carbon dioxide fixation, as well as the oxidative fragmentation of the pentose substrate in the photorespiration process. Both reactions occur simultaneously and in competition at the same active site. Although the small subunit is not catalytic it is essential for maximal activity. This is Ribulose bisphosphate carboxylase small subunit from Trieres chinensis (Marine centric diatom).